The primary structure comprises 290 residues: Acetylglutamate kinase (290 aa).

Substrate is bound by residues 65 to 66 (GG), Arg87, and Asn186.

This sequence belongs to the acetylglutamate kinase family. ArgB subfamily.

It is found in the cytoplasm. It carries out the reaction N-acetyl-L-glutamate + ATP = N-acetyl-L-glutamyl 5-phosphate + ADP. It functions in the pathway amino-acid biosynthesis; L-arginine biosynthesis; N(2)-acetyl-L-ornithine from L-glutamate: step 2/4. Its function is as follows. Catalyzes the ATP-dependent phosphorylation of N-acetyl-L-glutamate. The polypeptide is Acetylglutamate kinase (Mycolicibacterium gilvum (strain PYR-GCK) (Mycobacterium gilvum (strain PYR-GCK))).